The following is a 350-amino-acid chain: tRNA uridine(34) hydroxylase (350 aa).

The region spanning 146-240 (DDPDTLFVDM…YARKAKEQGL (95 aa)) is the Rhodanese domain. The active-site Cysteine persulfide intermediate is the C200.

This sequence belongs to the TrhO family.

The enzyme catalyses uridine(34) in tRNA + AH2 + O2 = 5-hydroxyuridine(34) in tRNA + A + H2O. In terms of biological role, catalyzes oxygen-dependent 5-hydroxyuridine (ho5U) modification at position 34 in tRNAs. The chain is tRNA uridine(34) hydroxylase from Yersinia enterocolitica serotype O:8 / biotype 1B (strain NCTC 13174 / 8081).